A 271-amino-acid polypeptide reads, in one-letter code: Dermonecrotic toxin LarSicTox-alphaIB1c (271 aa).

His3 is an active-site residue. Glu23 and Asp25 together coordinate Mg(2+). His39 serves as the catalytic Nucleophile. Cystine bridges form between Cys43–Cys49 and Cys45–Cys188. Asp83 is a binding site for Mg(2+). The N-linked (GlcNAc...) asparagine glycan is linked to Asn248.

The protein belongs to the arthropod phospholipase D family. Class II subfamily. Requires Mg(2+) as cofactor. As to expression, expressed by the venom gland.

The protein localises to the secreted. It carries out the reaction an N-(acyl)-sphingosylphosphocholine = an N-(acyl)-sphingosyl-1,3-cyclic phosphate + choline. The enzyme catalyses an N-(acyl)-sphingosylphosphoethanolamine = an N-(acyl)-sphingosyl-1,3-cyclic phosphate + ethanolamine. It catalyses the reaction a 1-acyl-sn-glycero-3-phosphocholine = a 1-acyl-sn-glycero-2,3-cyclic phosphate + choline. The catalysed reaction is a 1-acyl-sn-glycero-3-phosphoethanolamine = a 1-acyl-sn-glycero-2,3-cyclic phosphate + ethanolamine. Its function is as follows. Dermonecrotic toxins cleave the phosphodiester linkage between the phosphate and headgroup of certain phospholipids (sphingolipid and lysolipid substrates), forming an alcohol (often choline) and a cyclic phosphate. This toxin acts on sphingomyelin (SM). It may also act on ceramide phosphoethanolamine (CPE), lysophosphatidylcholine (LPC) and lysophosphatidylethanolamine (LPE), but not on lysophosphatidylserine (LPS), and lysophosphatidylglycerol (LPG). It acts by transphosphatidylation, releasing exclusively cyclic phosphate products as second products. Induces dermonecrosis, hemolysis, increased vascular permeability, edema, inflammatory response, and platelet aggregation. This is Dermonecrotic toxin LarSicTox-alphaIB1c from Loxosceles arizonica (Arizona brown spider).